Here is a 319-residue protein sequence, read N- to C-terminus: Succinoglycan biosynthesis protein ExoW (319 aa).

Belongs to the glycosyltransferase 2 family.

It localises to the cell membrane. The protein operates within glycan metabolism; exopolysaccharide biosynthesis. Glycosyltransferase required for the synthesis of succinoglycan (EPS I). Needed for the addition of the seventh sugar (glucose), catalyzes the formation of a beta-1,3 linkage between the seventh and eighth sugar. This Rhizobium meliloti (strain 1021) (Ensifer meliloti) protein is Succinoglycan biosynthesis protein ExoW (exoW).